The chain runs to 759 residues: Phosphoribosylformylglycinamidine synthase subunit PurL (759 aa).

His46 is an active-site residue. ATP is bound by residues Tyr49 and Lys88. Glu90 is a Mg(2+) binding site. Substrate-binding positions include 91–94 and Arg113; that span reads SHNH. Residue His92 is the Proton acceptor of the active site. Asp114 is a Mg(2+) binding site. Substrate is bound at residue Gln237. Mg(2+) is bound at residue Asp265. Position 309–311 (309–311) interacts with substrate; that stretch reads ESQ. Residues Asp498 and Gly535 each coordinate ATP. Residue Asn536 coordinates Mg(2+). Ser538 lines the substrate pocket.

It belongs to the FGAMS family. Monomer. Part of the FGAM synthase complex composed of 1 PurL, 1 PurQ and 2 PurS subunits.

It is found in the cytoplasm. The enzyme catalyses N(2)-formyl-N(1)-(5-phospho-beta-D-ribosyl)glycinamide + L-glutamine + ATP + H2O = 2-formamido-N(1)-(5-O-phospho-beta-D-ribosyl)acetamidine + L-glutamate + ADP + phosphate + H(+). It participates in purine metabolism; IMP biosynthesis via de novo pathway; 5-amino-1-(5-phospho-D-ribosyl)imidazole from N(2)-formyl-N(1)-(5-phospho-D-ribosyl)glycinamide: step 1/2. Its function is as follows. Part of the phosphoribosylformylglycinamidine synthase complex involved in the purines biosynthetic pathway. Catalyzes the ATP-dependent conversion of formylglycinamide ribonucleotide (FGAR) and glutamine to yield formylglycinamidine ribonucleotide (FGAM) and glutamate. The FGAM synthase complex is composed of three subunits. PurQ produces an ammonia molecule by converting glutamine to glutamate. PurL transfers the ammonia molecule to FGAR to form FGAM in an ATP-dependent manner. PurS interacts with PurQ and PurL and is thought to assist in the transfer of the ammonia molecule from PurQ to PurL. This Anaeromyxobacter dehalogenans (strain 2CP-1 / ATCC BAA-258) protein is Phosphoribosylformylglycinamidine synthase subunit PurL.